The primary structure comprises 313 residues: MPLALCCMSHSPLLNLPGPSAELLDQITDAIADARKFVEQFDPELVVTFSPDHYNGFFYRLMPPFCIGTAAAGVGDYGTYQGPLPVDADIANACAESLWESGVDIAISTAMDVDHGTVQPLQELFGDATARPVVPIFINSVATPLGPLSRSRALGAAVGTFLATLDKRVLIVGSGGLSHDPPVPTLATAPPAALDRIVHGAPMTPEQRMARQEAVIKAAHDFAHGQSPLRSLNPDWDRSLLEIFDEGRLSDLDGWTNTFITGEGGNSAHEIRTWVAAFAALAAHGEYQTGNHFYRAAPELIAGFAIRTAVPST.

Histidine 115 acts as the Proton donor in catalysis. Catalysis depends on histidine 179, which acts as the Proton acceptor.

It belongs to the LigB/MhpB extradiol dioxygenase family. In terms of assembly, homotetramer. Fe(2+) is required as a cofactor.

The enzyme catalyses 3-(2,3-dihydroxyphenyl)propanoate + O2 = (2Z,4E)-2-hydroxy-6-oxonona-2,4-dienedioate + H(+). It carries out the reaction (2E)-3-(2,3-dihydroxyphenyl)prop-2-enoate + O2 = (2Z,4E,7E)-2-hydroxy-6-oxonona-2,4,7-trienedioate + H(+). The protein operates within aromatic compound metabolism; 3-phenylpropanoate degradation. Functionally, catalyzes the non-heme iron(II)-dependent oxidative cleavage of 2,3-dihydroxyphenylpropionic acid and 2,3-dihydroxicinnamic acid into 2-hydroxy-6-ketononadienedioate and 2-hydroxy-6-ketononatrienedioate, respectively. The polypeptide is 2,3-dihydroxyphenylpropionate/2,3-dihydroxicinnamic acid 1,2-dioxygenase (Mycolicibacterium smegmatis (strain ATCC 700084 / mc(2)155) (Mycobacterium smegmatis)).